The sequence spans 324 residues: Malate dehydrogenase (324 aa).

NAD(+) is bound by residues glycine 20–glycine 25 and aspartate 44. Positions 93 and 99 each coordinate substrate. NAD(+) is bound by residues asparagine 106 and valine 129–asparagine 131. Substrate-binding residues include asparagine 131 and arginine 162. Histidine 186 acts as the Proton acceptor in catalysis.

It belongs to the LDH/MDH superfamily. MDH type 3 family.

It carries out the reaction (S)-malate + NAD(+) = oxaloacetate + NADH + H(+). Catalyzes the reversible oxidation of malate to oxaloacetate. The sequence is that of Malate dehydrogenase from Synechocystis sp. (strain ATCC 27184 / PCC 6803 / Kazusa).